The following is a 126-amino-acid chain: Larval cuticle protein 2 (126 aa).

The first 16 residues, 1–16 (MFKFVMVFAVLGLAAA), serve as a signal peptide directing secretion. A Chitin-binding type R&amp;R domain is found at 39–100 (ADGFDTDLVV…PVGAVLPTPP (62 aa)).

Functionally, component of the larval cuticle. This chain is Larval cuticle protein 2 (Lcp2), found in Drosophila miranda (Fruit fly).